Consider the following 355-residue polypeptide: Apyrase apy-1 (355 aa).

Over 1–6 the chain is Cytoplasmic; that stretch reads MTQESN. Residues 7 to 29 traverse the membrane as a helical; Signal-anchor for type II membrane protein segment; it reads SNFFNFLLFGFVTAIAFYSGTQF. Asn30 carries an N-linked (GlcNAc...) asparagine glycan. At 30–355 the chain is on the lumenal side; that stretch reads NKSSEQEEHI…PYKYEGIAFA (326 aa). Ca(2+) contacts are provided by Ser119, Glu166, and Glu235. An N-linked (GlcNAc...) asparagine glycan is attached at Asn291. Glu350 contributes to the Ca(2+) binding site.

Belongs to the apyrase family. Ca(2+) is required as a cofactor.

Its subcellular location is the endomembrane system. It catalyses the reaction a ribonucleoside 5'-diphosphate + H2O = a ribonucleoside 5'-phosphate + phosphate + H(+). Functionally, hydrolyzes UDP and to a lesser extent GDP. By preventing the accumulation of NDP, may promote the reglucosylation of incompletely folded glycoproteins in the endoplasmic reticulum following the unfolded protein response. This is Apyrase apy-1 from Caenorhabditis elegans.